A 527-amino-acid polypeptide reads, in one-letter code: MLASIISILRVFVLLFNTPLFIFAFLPVGFLGYFILQAYAKNPLFPKLWLVLASLFFYAFWNVKYLPLLVGSIVFNYFVALKIHQTQPNAYKRLWLILGLIANVSLLGFFKYTDFFLTNFNLIWKSHFETLHLILPLAISFFTLQQIAYLMDTYKQNQIMQPKMRERVSENAPILLNPPTSFFSLSHFLDYALFVSFFPQLIAGPIVHHSEMMPQFKDKNNQYLNYRNIALGLFIFSIGLFKKVVIADNTAHFADFGFDKATSLSFIQAWMTSLSYSFQLYFDFSGYCDMAIGIGLFFNIKLPINFNSPYKALNIQDFWRRWHITLSRFLKEYLYIPLGGNRVKELIVYRNLILVFLIGGFWHGAGWTFIIWGLLHGIALSVHRAYSHATRKFHFTMPKILAWLITFNFINLAWVFFRAKNLESALKVLKGMVGLNGVSLCHLSKEASEFLNRVNDNMIMHTIMYASPTFKMCVLMIIISFCLKNSSHLYQSNQMDWIKTTSACLLLSIGFLFIFASSQSVFLYFNF.

11 helical membrane passes run 11–31, 55–75, 96–116, 131–151, 187–207, 228–248, 280–300, 352–372, 397–417, 463–483, and 505–525; these read VFVL…VGFL, LFFY…SIVF, LILG…TDFF, LHLI…AYLM, HFLD…GPIV, NIAL…VIAD, LYFD…FFNI, LILV…FIIW, MPKI…WVFF, IMYA…SFCL, and LLLS…FLYF. The active site involves His363.

This sequence belongs to the membrane-bound acyltransferase family.

The protein resides in the cell membrane. Its function is as follows. Catalyzes the O-acetylation of peptidoglycan (PG), an important mechanism that appears to confer lysozyme resistance and contributes to pathogen persistence in the host. This chain is Peptidoglycan O-acetyltransferase (patA), found in Helicobacter pylori (strain ATCC 700392 / 26695) (Campylobacter pylori).